Reading from the N-terminus, the 83-residue chain is MTDSAKPEVSGLSFEKAVAELESIVARLERGDVALDESIEIYERGEALKKHCETLLSAAENRIEKIRLDRAGKPRGVEPLDGA.

It belongs to the XseB family. Heterooligomer composed of large and small subunits.

Its subcellular location is the cytoplasm. The enzyme catalyses Exonucleolytic cleavage in either 5'- to 3'- or 3'- to 5'-direction to yield nucleoside 5'-phosphates.. Functionally, bidirectionally degrades single-stranded DNA into large acid-insoluble oligonucleotides, which are then degraded further into small acid-soluble oligonucleotides. This Rhizobium etli (strain ATCC 51251 / DSM 11541 / JCM 21823 / NBRC 15573 / CFN 42) protein is Exodeoxyribonuclease 7 small subunit.